The following is a 149-amino-acid chain: Cytochrome c-type biogenesis protein CcmE (149 aa).

Topologically, residues 1 to 8 (MNPKRKQR) are cytoplasmic. The helical; Signal-anchor for type II membrane protein transmembrane segment at 9-29 (LIIVSFLVIGVSATVGLIMAA) threads the bilayer. Residues 30–149 (LSSNVNHFYN…AQDAAPAQTY (120 aa)) lie on the Periplasmic side of the membrane. Residues histidine 124 and tyrosine 128 each contribute to the heme site.

It belongs to the CcmE/CycJ family.

It is found in the cell inner membrane. Its function is as follows. Heme chaperone required for the biogenesis of c-type cytochromes. Transiently binds heme delivered by CcmC and transfers the heme to apo-cytochromes in a process facilitated by CcmF and CcmH. This is Cytochrome c-type biogenesis protein CcmE from Hahella chejuensis (strain KCTC 2396).